The following is a 202-amino-acid chain: MLELLKVSITGDLSSGKTEASRVFQDLGAYVISADKVSHSFLVPHSHIGRRVIDLLGPEVVVDNAFDRKVIAEKVFDNLVLLQALEAILHPEVRRIIEEQYYQVAKERKHPLFIAEVPLLYEIHYAKWFDRVILITADENIRRERFTKKTNCSDLNFYQRCARFSSNEEKKMHADIVIENNGTKEELRHKVEEYFYALKGAL.

The DPCK domain maps to 6–202 (KVSITGDLSS…EYFYALKGAL (197 aa)). An ATP-binding site is contributed by 14–19 (SSGKTE).

It belongs to the CoaE family.

It is found in the cytoplasm. It catalyses the reaction 3'-dephospho-CoA + ATP = ADP + CoA + H(+). The protein operates within cofactor biosynthesis; coenzyme A biosynthesis; CoA from (R)-pantothenate: step 5/5. Catalyzes the phosphorylation of the 3'-hydroxyl group of dephosphocoenzyme A to form coenzyme A. This is Dephospho-CoA kinase from Chlamydia caviae (strain ATCC VR-813 / DSM 19441 / 03DC25 / GPIC) (Chlamydophila caviae).